The following is a 317-amino-acid chain: tRNA-cytidine(32) 2-sulfurtransferase (317 aa).

Residues 63-68 (SGGKDS) carry the PP-loop motif motif. Residues Cys138, Cys141, and Cys229 each coordinate [4Fe-4S] cluster.

The protein belongs to the TtcA family. Homodimer. The cofactor is Mg(2+). It depends on [4Fe-4S] cluster as a cofactor.

Its subcellular location is the cytoplasm. The catalysed reaction is cytidine(32) in tRNA + S-sulfanyl-L-cysteinyl-[cysteine desulfurase] + AH2 + ATP = 2-thiocytidine(32) in tRNA + L-cysteinyl-[cysteine desulfurase] + A + AMP + diphosphate + H(+). Its pathway is tRNA modification. Catalyzes the ATP-dependent 2-thiolation of cytidine in position 32 of tRNA, to form 2-thiocytidine (s(2)C32). The sulfur atoms are provided by the cysteine/cysteine desulfurase (IscS) system. This chain is tRNA-cytidine(32) 2-sulfurtransferase, found in Janthinobacterium sp. (strain Marseille) (Minibacterium massiliensis).